The sequence spans 482 residues: Chromosomal replication initiator protein DnaA (482 aa).

The domain I, interacts with DnaA modulators stretch occupies residues 1–71 (MKQSILFERV…TGLFQAEDPE (71 aa)). Residues 71-139 (EILKIEVLVR…ASFGSPLFGS (69 aa)) are domain II. Residues 140-362 (PLDSRFTFDT…GAFNQLVFRR (223 aa)) are domain III, AAA+ region. Positions 186, 188, 189, and 190 each coordinate ATP. Residues 363–482 (SFEPNLSIER…VELLKRLINE (120 aa)) are domain IV, binds dsDNA.

It belongs to the DnaA family. Oligomerizes as a right-handed, spiral filament on DNA at oriC.

It is found in the cytoplasm. Its function is as follows. Plays an essential role in the initiation and regulation of chromosomal replication. ATP-DnaA binds to the origin of replication (oriC) to initiate formation of the DNA replication initiation complex once per cell cycle. Binds the DnaA box (a 9 base pair repeat at the origin) and separates the double-stranded (ds)DNA. Forms a right-handed helical filament on oriC DNA; dsDNA binds to the exterior of the filament while single-stranded (ss)DNA is stabiized in the filament's interior. The ATP-DnaA-oriC complex binds and stabilizes one strand of the AT-rich DNA unwinding element (DUE), permitting loading of DNA polymerase. After initiation quickly degrades to an ADP-DnaA complex that is not apt for DNA replication. Binds acidic phospholipids. The chain is Chromosomal replication initiator protein DnaA from Rhizobium johnstonii (strain DSM 114642 / LMG 32736 / 3841) (Rhizobium leguminosarum bv. viciae).